Here is a 323-residue protein sequence, read N- to C-terminus: Elongation factor P--(R)-beta-lysine ligase (323 aa).

S74–E76 lines the substrate pocket. Residues R98 to E100 and N107 each bind ATP. Y116 provides a ligand contact to substrate. E242–L243 is a binding site for ATP. E249 serves as a coordination point for substrate. Residue G298 participates in ATP binding.

It belongs to the class-II aminoacyl-tRNA synthetase family. EpmA subfamily. In terms of assembly, homodimer.

The catalysed reaction is D-beta-lysine + L-lysyl-[protein] + ATP = N(6)-((3R)-3,6-diaminohexanoyl)-L-lysyl-[protein] + AMP + diphosphate + H(+). With EpmB is involved in the beta-lysylation step of the post-translational modification of translation elongation factor P (EF-P). Catalyzes the ATP-dependent activation of (R)-beta-lysine produced by EpmB, forming a lysyl-adenylate, from which the beta-lysyl moiety is then transferred to the epsilon-amino group of a conserved specific lysine residue in EF-P. This Photobacterium profundum (strain SS9) protein is Elongation factor P--(R)-beta-lysine ligase.